The primary structure comprises 569 residues: MAAATLSLLNNGELASSVKSPGTGRYAAVYSEVQNSRLDHPLPLPSVLGSPFKVVDGPPSSAAGHPEEIAKLFPSLYGQPCVSLVPDDSGDVAMNQILKIGVVLSGGQAPGGHNVISGIFDYLQTHCKGSTMYGFRGGPAGVMKGKYVVLTPEFIYPYRNQGGFDMICSGRDKIETPEQFKQAEETAKKLDLDGLVVIGGDDSNTNACLLAENFRSKNLKTRVIGCPKTIDGDLKSKEVPTSFGFDTACKIYAEMIGNVMIDARSTGKYYHFVRLMGRAASHITLECALQTHPNVTLIGEEVFAKKLTLKNVTDYIADVVCKRAESGYNYGVILIPEGLIDFIPEVQQLIAELNEILAHDVVDEAGVWKKKLTPQCLELFELLPLAIQEQLLLERDPHGNVQVAKIETEKMLIQMVETELDQRKQKGAYNAQFKGQSHFFGYEGRCGLPSNFDSTYCYALGYGAGSLLQSGKTGLISSVGNLAAPVEEWTVGGTALTALMDVERRHGKFKPVIKKAMVELEGAPFKKFASKREEWALNNRYINPGPIQFVGPVANKVNHTLLLELGVDA.

Gly-107 is a diphosphate binding site. Asp-201 contacts Mg(2+). Substrate contacts are provided by residues 229–231 (TID), 268–269 (KY), 276–278 (MGR), Glu-337, and 442–445 (YEGR). Asp-231 acts as the Proton acceptor in catalysis.

The protein belongs to the phosphofructokinase type A (PFKA) family. PPi-dependent PFK group II subfamily. Clade 'Long' sub-subfamily. As to quaternary structure, tetramer of two alpha (regulatory) and two beta (catalytic) chains. Requires Mg(2+) as cofactor.

It localises to the cytoplasm. The enzyme catalyses beta-D-fructose 6-phosphate + diphosphate = beta-D-fructose 1,6-bisphosphate + phosphate + H(+). It participates in carbohydrate degradation; glycolysis; D-glyceraldehyde 3-phosphate and glycerone phosphate from D-glucose: step 3/4. With respect to regulation, allosterically activated by fructose 2,6-bisphosphate. Functionally, catalytic subunit of pyrophosphate--fructose 6-phosphate 1-phosphotransferase. Catalyzes the phosphorylation of D-fructose 6-phosphate, the first committing step of glycolysis. Uses inorganic phosphate (PPi) as phosphoryl donor instead of ATP like common ATP-dependent phosphofructokinases (ATP-PFKs), which renders the reaction reversible, and can thus function both in glycolysis and gluconeogenesis. In Solanum tuberosum (Potato), this protein is Pyrophosphate--fructose 6-phosphate 1-phosphotransferase subunit beta.